The primary structure comprises 354 residues: Uroporphyrinogen decarboxylase (354 aa).

Substrate-binding positions include 27 to 31 (RQAGR), D77, Y154, T209, and H327.

This sequence belongs to the uroporphyrinogen decarboxylase family. In terms of assembly, homodimer.

It is found in the cytoplasm. It carries out the reaction uroporphyrinogen III + 4 H(+) = coproporphyrinogen III + 4 CO2. It participates in porphyrin-containing compound metabolism; protoporphyrin-IX biosynthesis; coproporphyrinogen-III from 5-aminolevulinate: step 4/4. Catalyzes the decarboxylation of four acetate groups of uroporphyrinogen-III to yield coproporphyrinogen-III. The polypeptide is Uroporphyrinogen decarboxylase (Escherichia fergusonii (strain ATCC 35469 / DSM 13698 / CCUG 18766 / IAM 14443 / JCM 21226 / LMG 7866 / NBRC 102419 / NCTC 12128 / CDC 0568-73)).